Consider the following 835-residue polypeptide: Microcephalin (835 aa).

The 93-residue stretch at 1-93 folds into the BRCT 1 domain; the sequence is MAAPILKDVV…AHIDESLFPA (93 aa). A phosphoserine mark is found at Ser279, Ser287, Ser296, and Ser333. Disordered regions lie at residues 332-376 and 417-442; these read LSPT…RKRS and SPDN…PAQF. At Thr335 the chain carries Phosphothreonine. Residues 343-361 show a composition bias toward basic residues; it reads LLIHSRPRSSSVKRKRVSH. Position 548 is a phosphoserine (Ser548). The segment at 555 to 583 is disordered; it reads AVDLKSTQNKGTTSKISNSSEGEAQSEHE. A compositionally biased stretch (polar residues) spans 559–577; that stretch reads KSTQNKGTTSKISNSSEGE. 2 consecutive BRCT domains span residues 640–730 and 751–833; these read SGRG…PFEL and YRGT…NYLL.

Interacts with CDC27 and maybe other components of the APC/C complex. Interacts with histone variant H2AX under DNA damage conditions.

Its subcellular location is the cytoplasm. It localises to the cytoskeleton. The protein resides in the microtubule organizing center. The protein localises to the centrosome. In terms of biological role, implicated in chromosome condensation and DNA damage induced cellular responses. May play a role in neurogenesis and regulation of the size of the cerebral cortex. This Pan troglodytes (Chimpanzee) protein is Microcephalin.